Here is a 565-residue protein sequence, read N- to C-terminus: Mitochondrial distribution and morphology protein 34 (565 aa).

The region spanning 1 to 195 (MAFNFNWSPL…LPAIIHRLSL (195 aa)) is the SMP-LTD domain. Disordered stretches follow at residues 207 to 236 (EDQD…VDAL), 296 to 317 (PSDQ…LSRT), and 348 to 504 (STYG…RQLP). A compositionally biased stretch (basic residues) spans 358-370 (RHSKAHARKRKKR). Basic and acidic residues predominate over residues 371–381 (VVDLRRPKQPE). Positions 382–401 (SETASVTDESSFTETTSAPS) are enriched in polar residues. 2 stretches are compositionally biased toward basic and acidic residues: residues 446 to 472 (LRRD…HAEV) and 483 to 496 (IRHE…EKQE).

This sequence belongs to the MDM34 family. In terms of assembly, component of the ER-mitochondria encounter structure (ERMES) or MDM complex, composed of mmm1, mdm10, mdm12 and mdm34.

The protein resides in the mitochondrion outer membrane. In terms of biological role, component of the ERMES/MDM complex, which serves as a molecular tether to connect the endoplasmic reticulum (ER) and mitochondria. Components of this complex are involved in the control of mitochondrial shape and protein biogenesis, and function in nonvesicular lipid trafficking between the ER and mitochondria. Mdm34 is required for the interaction of the ER-resident membrane protein mmm1 and the outer mitochondrial membrane-resident beta-barrel protein mdm10. This Aspergillus terreus (strain NIH 2624 / FGSC A1156) protein is Mitochondrial distribution and morphology protein 34.